We begin with the raw amino-acid sequence, 275 residues long: Pantothenate synthetase (275 aa).

26-33 (MGFLHEGH) is a binding site for ATP. His33 acts as the Proton donor in catalysis. Residue Gln57 participates in (R)-pantoate binding. Gln57 provides a ligand contact to beta-alanine. An ATP-binding site is contributed by 143 to 146 (GQKD). (R)-pantoate is bound at residue Gln149. ATP contacts are provided by residues Ala172 and 180–183 (RSSR).

This sequence belongs to the pantothenate synthetase family. Homodimer.

Its subcellular location is the cytoplasm. The enzyme catalyses (R)-pantoate + beta-alanine + ATP = (R)-pantothenate + AMP + diphosphate + H(+). It functions in the pathway cofactor biosynthesis; (R)-pantothenate biosynthesis; (R)-pantothenate from (R)-pantoate and beta-alanine: step 1/1. Functionally, catalyzes the condensation of pantoate with beta-alanine in an ATP-dependent reaction via a pantoyl-adenylate intermediate. This Gluconobacter oxydans (strain 621H) (Gluconobacter suboxydans) protein is Pantothenate synthetase.